Consider the following 70-residue polypeptide: MRESAEAAGETLVKEAEGSVVEAQEQAWHEACARIDAQRREACGQLERELSVLEEDVERFEAFLDGFFFG.

This is an uncharacterized protein from Treponema pallidum (strain Nichols).